The chain runs to 570 residues: Periplasmic trehalase (570 aa).

Residues 1–34 (MIPPEIRRSVLLQKAIKLALAGTLLTFASFSATA) form the signal peptide. Substrate is bound by residues arginine 159, 166 to 167 (WD), asparagine 203, 212 to 214 (RSQ), 284 to 286 (RPE), and glycine 317. Catalysis depends on proton donor/acceptor residues aspartate 319 and glutamate 503. Residue glutamate 518 participates in substrate binding. A disordered region spans residues 544-570 (KPCDSVPSTRPASLSATPTKTPSAATQ). A compositionally biased stretch (low complexity) spans 554-570 (PASLSATPTKTPSAATQ).

This sequence belongs to the glycosyl hydrolase 37 family. In terms of assembly, monomer.

It localises to the periplasm. The enzyme catalyses alpha,alpha-trehalose + H2O = alpha-D-glucose + beta-D-glucose. Its function is as follows. Provides the cells with the ability to utilize trehalose at high osmolarity by splitting it into glucose molecules that can subsequently be taken up by the phosphotransferase-mediated uptake system. In Salmonella paratyphi A (strain AKU_12601), this protein is Periplasmic trehalase.